The following is a 78-amino-acid chain: Translational regulator CsrA (78 aa).

Belongs to the CsrA/RsmA family. As to quaternary structure, homodimer; the beta-strands of each monomer intercalate to form a hydrophobic core, while the alpha-helices form wings that extend away from the core.

It is found in the cytoplasm. Functionally, a translational regulator that binds mRNA to regulate translation initiation and/or mRNA stability. Usually binds in the 5'-UTR at or near the Shine-Dalgarno sequence preventing ribosome-binding, thus repressing translation. Its main target seems to be the major flagellin gene, while its function is anatagonized by FliW. The polypeptide is Translational regulator CsrA (Desulfotalea psychrophila (strain LSv54 / DSM 12343)).